Reading from the N-terminus, the 706-residue chain is Frizzled-6 (706 aa).

Positions 1 to 18 (MEMFTFLLTCIFLPLLRG) are cleaved as a signal peptide. The FZ domain occupies 19–132 (HSLFTCEPIT…CDRLQYCDET (114 aa)). Residues 19–201 (HSLFTCEPIT…SDELEFAKSF (183 aa)) lie on the Extracellular side of the membrane. Intrachain disulfides connect C24–C85, C32–C78, C69–C106, C95–C129, and C99–C123. An N-linked (GlcNAc...) asparagine glycan is attached at N38. Residues 202–222 (IGTVSIFCLCATLFTFLTFLI) traverse the membrane as a helical segment. Over 223-233 (DVRRFRYPERP) the chain is Cytoplasmic. A helical transmembrane segment spans residues 234-254 (IIYYSVCYSIVSLMYFIGFLL). The Extracellular portion of the chain corresponds to 255-284 (GDSTACNKADEKLELGDTVVLGSQNKACTV). Residues 285–305 (LFMLLYFFTMAGTVWWVILTI) traverse the membrane as a helical segment. At 306 to 324 (TWFLAAGRKWSCEAIEQKA) the chain is on the cytoplasmic side. A helical membrane pass occupies residues 325 to 345 (VWFHAVAWGTPGFLTVMLLAM). Topologically, residues 346-370 (NKVEGDNISGVCFVGLYDLDASRYF) are extracellular. N-linked (GlcNAc...) asparagine glycosylation is present at N352. The chain crosses the membrane as a helical span at residues 371–391 (VLLPLCLCVFVGLSLLLAGII). Over 392-416 (SLNHVRQVIQHDGRNQEKLKKFMIR) the chain is Cytoplasmic. The helical transmembrane segment at 417-437 (IGVFSGLYLVPLVTLLGCYVY) threads the bilayer. Over 438-473 (EQVNRITWEITWVSDHCRQYHIPCPYQAKAKARPEL) the chain is Extracellular. Residues 474–494 (ALFMIKYLMTLIVGISAVFWV) form a helical membrane-spanning segment. At 495-706 (GSKKTCTEWA…EQGGGCHSDT (212 aa)) the chain is on the cytoplasmic side. Positions 498–503 (KTCTEW) match the Lys-Thr-X-X-X-Trp motif, mediates interaction with the PDZ domain of Dvl family members motif. The tract at residues 588-706 (EIQTSPETSM…EQGGGCHSDT (119 aa)) is disordered. Residues 646–658 (ARSEGRISPKSDI) show a composition bias toward basic and acidic residues. S653 carries the phosphoserine modification. Residues 662-672 (GLAQSNNLQVP) are compositionally biased toward polar residues. Residues 673–685 (SSSEPSSLKGSTS) show a composition bias toward low complexity. Over residues 694 to 706 (VRKEQGGGCHSDT) the composition is skewed to basic and acidic residues.

This sequence belongs to the G-protein coupled receptor Fz/Smo family. Interacts with LMBR1L. Post-translationally, ubiquitinated by ZNRF3, leading to its degradation by the proteasome. In terms of tissue distribution, detected in adult heart, brain, placenta, lung, liver, skeletal muscle, kidney, pancreas, thymus, prostate, testis, ovary, small intestine and colon. In the fetus, expressed in brain, lung, liver and kidney.

It localises to the membrane. The protein resides in the cell membrane. Its subcellular location is the cell surface. The protein localises to the apical cell membrane. It is found in the cytoplasmic vesicle membrane. It localises to the endoplasmic reticulum membrane. Functionally, receptor for Wnt proteins. Most of frizzled receptors are coupled to the beta-catenin canonical signaling pathway, which leads to the activation of disheveled proteins, inhibition of GSK-3 kinase, nuclear accumulation of beta-catenin and activation of Wnt target genes. A second signaling pathway involving PKC and calcium fluxes has been seen for some family members, but it is not yet clear if it represents a distinct pathway or if it can be integrated in the canonical pathway, as PKC seems to be required for Wnt-mediated inactivation of GSK-3 kinase. Both pathways seem to involve interactions with G-proteins. May be involved in transduction and intercellular transmission of polarity information during tissue morphogenesis and/or in differentiated tissues. Together with FZD3, is involved in the neural tube closure and plays a role in the regulation of the establishment of planar cell polarity (PCP), particularly in the orientation of asymmetric bundles of stereocilia on the apical faces of a subset of auditory and vestibular sensory cells located in the inner ear. This chain is Frizzled-6 (FZD6), found in Homo sapiens (Human).